Reading from the N-terminus, the 116-residue chain is NADH-ubiquinone oxidoreductase chain 3 (116 aa).

3 helical membrane-spanning segments follow: residues 4 to 24, 56 to 76, and 88 to 108; these read LIITLIINTALSTIIVLIAFW, FFLIAITFLLFDLEIALLLPL, and TLILAYCLIILLTAGLAYEWI.

This sequence belongs to the complex I subunit 3 family. In terms of assembly, core subunit of respiratory chain NADH dehydrogenase (Complex I) which is composed of 45 different subunits. Interacts with TMEM186. Interacts with TMEM242.

Its subcellular location is the mitochondrion inner membrane. It carries out the reaction a ubiquinone + NADH + 5 H(+)(in) = a ubiquinol + NAD(+) + 4 H(+)(out). In terms of biological role, core subunit of the mitochondrial membrane respiratory chain NADH dehydrogenase (Complex I) which catalyzes electron transfer from NADH through the respiratory chain, using ubiquinone as an electron acceptor. Essential for the catalytic activity of complex I. This is NADH-ubiquinone oxidoreductase chain 3 from Osphranter robustus (Wallaroo).